We begin with the raw amino-acid sequence, 134 residues long: MGFKRYVEIGRVALVNYGEDHGKLVVIVDVVDQNRALVDAPDMERIQMNFKRLSLTDIVIDINRVPKKKALIEAMEKADVKNKWEKSSWGRKLIVQKRRANLNDFDRFKIMLAKIKKAGVVRQELAKLKKEITA.

It belongs to the eukaryotic ribosomal protein eL14 family.

This chain is Large ribosomal subunit protein eL14y (RPL14B), found in Arabidopsis thaliana (Mouse-ear cress).